The following is a 774-amino-acid chain: MTPLRVFRKTTPLVNTIRLSLLPLAGLSFSAFAAQVNIAPGSLDKALNQYAAHSGFTLSVDASLTRGKQSNGLHGDYDVESGLQQLLDGSGLQVKPLGNNSWTLEPAPAPKEDALTVVGDWLGDARENDVFEHAGARDVIRREDFAKTGATTMREVLNRIPGVSAPENNGTGSHDLAMNFGIRGLNPRLASRSTVLMDGIPVPFAPYGQPQLSLAPVSLGNMDAIDVVRGGGAVRYGPQSVGGVVNFVTRAIPQDFGIEAGVEGQLSPTSSQNNPKETHNLMVGGTADNGFGTALLYSGTRGSDWREHSATRIDDLMLKSKYAPDEVHTFNSLLQYYDGEADMPGGLSRADYDADRWQSTRPYDRFWGRRKLASLGYQFQPDSQHKFNIQGFYTQTLRSGYLEQGKRITLSPRNYWVRGIEPRYSQIFMIGPSAHEVGVGYRYLNESTHEMRYYTATSSGQLPSGSSPYDRDTRSGTEAHAWYLDDKIDIGNWTITPGMRFEHIESYQNNAITGTHEEVSYNAPLPALNVLYHLTDSWNLYANTEGSFGTVQYSQIGKAVQSGNVEPEKARTWELGTRYDDGALTAEMGLFLINFNNQYDSNQTNDTVTARGKTRHTGLETQARYDLGTLTPTLDNVSIYASYAYVNAEIREKGDTYGNLVPFSPKHKGTLGVDYKPGNWTFNLNSDFQSSQFADNANTVKESADGSTGRIPGFMLWGARVAYDFGPQMADLNLAFGVKNIFDQDYFIRSYDDNNKGIYAGQPRTLYMQGSLKF.

A signal peptide spans M1–A33. The TonB box signature appears at F56–S63. The 122-residue stretch at D129–R250 folds into the TBDR plug domain. The region spanning D255–F774 is the TBDR beta-barrel domain. Positions G757–F774 match the TonB C-terminal box motif.

It belongs to the TonB-dependent receptor family. As to quaternary structure, interacts (via periplasmic N-terminus) with FecR (via periplasmic C-terminus).

The protein resides in the cell outer membrane. Functionally, fecA is the outer membrane receptor protein in the Fe(3+) dicitrate transport system. The polypeptide is Fe(3+) dicitrate transport protein FecA (fecA) (Escherichia coli (strain K12)).